Consider the following 103-residue polypeptide: Small ribosomal subunit protein uS10 (103 aa).

This sequence belongs to the universal ribosomal protein uS10 family. As to quaternary structure, part of the 30S ribosomal subunit.

Its function is as follows. Involved in the binding of tRNA to the ribosomes. The protein is Small ribosomal subunit protein uS10 of Mycoplasmopsis pulmonis (strain UAB CTIP) (Mycoplasma pulmonis).